We begin with the raw amino-acid sequence, 454 residues long: tRNA modification GTPase MnmE (454 aa).

Positions 23, 80, and 120 each coordinate (6S)-5-formyl-5,6,7,8-tetrahydrofolate. The 162-residue stretch at 216–377 (GMKVVIAGRP…LRNHLKQSMG (162 aa)) folds into the TrmE-type G domain. Asn-226 contacts K(+). GTP is bound by residues 226-231 (NAGKSS), 245-251 (TDIAGTT), 270-273 (DTAG), 335-338 (NKAD), and 358-360 (SAR). Residue Ser-230 participates in Mg(2+) binding. K(+)-binding residues include Thr-245, Ile-247, and Thr-250. Thr-251 contacts Mg(2+). Lys-454 contributes to the (6S)-5-formyl-5,6,7,8-tetrahydrofolate binding site.

It belongs to the TRAFAC class TrmE-Era-EngA-EngB-Septin-like GTPase superfamily. TrmE GTPase family. Homodimer. Heterotetramer of two MnmE and two MnmG subunits. Requires K(+) as cofactor.

It is found in the cytoplasm. Its function is as follows. Exhibits a very high intrinsic GTPase hydrolysis rate. Involved in the addition of a carboxymethylaminomethyl (cmnm) group at the wobble position (U34) of certain tRNAs, forming tRNA-cmnm(5)s(2)U34. This chain is tRNA modification GTPase MnmE, found in Salmonella arizonae (strain ATCC BAA-731 / CDC346-86 / RSK2980).